A 1071-amino-acid chain; its full sequence is Carbamoyl phosphate synthase large chain (1071 aa).

The tract at residues 1–403 (MPKRTDLKSI…SFQKALRGLE (403 aa)) is carboxyphosphate synthetic domain. Residues Arg129, Arg169, Gly175, Gly176, Gln208, Val210, Glu215, Gly241, Val242, His243, Gln285, and Glu299 each contribute to the ATP site. An ATP-grasp 1 domain is found at 133–328 (KEAMEKIGLS…IAKVAAKLAV (196 aa)). Positions 285, 299, and 301 each coordinate Mg(2+). Residues Gln285, Glu299, and Asn301 each coordinate Mn(2+). The interval 404 to 548 (TGLCGFNPRS…YSTYEEECES (145 aa)) is oligomerization domain. A carbamoyl phosphate synthetic domain region spans residues 549 to 930 (RPSDRKKVMI…AYYKAQLGAG (382 aa)). In terms of domain architecture, ATP-grasp 2 spans 673–864 (QKVLNDLGLR…LAKVGARCMA (192 aa)). Residues Arg709, Phe748, Leu750, Glu755, Gly780, Ile781, His782, Ser783, Gln823, and Glu835 each coordinate ATP. Mg(2+)-binding residues include Gln823, Glu835, and Asn837. Gln823, Glu835, and Asn837 together coordinate Mn(2+). The MGS-like domain occupies 931-1071 (ERLNPTGKIF…ELHGRLKNRN (141 aa)). Residues 931–1071 (ERLNPTGKIF…ELHGRLKNRN (141 aa)) form an allosteric domain region.

Belongs to the CarB family. As to quaternary structure, composed of two chains; the small (or glutamine) chain promotes the hydrolysis of glutamine to ammonia, which is used by the large (or ammonia) chain to synthesize carbamoyl phosphate. Tetramer of heterodimers (alpha,beta)4. It depends on Mg(2+) as a cofactor. Mn(2+) serves as cofactor.

The catalysed reaction is hydrogencarbonate + L-glutamine + 2 ATP + H2O = carbamoyl phosphate + L-glutamate + 2 ADP + phosphate + 2 H(+). It catalyses the reaction hydrogencarbonate + NH4(+) + 2 ATP = carbamoyl phosphate + 2 ADP + phosphate + 2 H(+). The protein operates within amino-acid biosynthesis; L-arginine biosynthesis; carbamoyl phosphate from bicarbonate: step 1/1. Its pathway is pyrimidine metabolism; UMP biosynthesis via de novo pathway; (S)-dihydroorotate from bicarbonate: step 1/3. In terms of biological role, large subunit of the glutamine-dependent carbamoyl phosphate synthetase (CPSase). CPSase catalyzes the formation of carbamoyl phosphate from the ammonia moiety of glutamine, carbonate, and phosphate donated by ATP, constituting the first step of 2 biosynthetic pathways, one leading to arginine and/or urea and the other to pyrimidine nucleotides. The large subunit (synthetase) binds the substrates ammonia (free or transferred from glutamine from the small subunit), hydrogencarbonate and ATP and carries out an ATP-coupled ligase reaction, activating hydrogencarbonate by forming carboxy phosphate which reacts with ammonia to form carbamoyl phosphate. The chain is Carbamoyl phosphate synthase large chain from Neisseria meningitidis serogroup B (strain ATCC BAA-335 / MC58).